Here is a 412-residue protein sequence, read N- to C-terminus: Putative competence-damage inducible protein (412 aa).

It belongs to the CinA family.

This is Putative competence-damage inducible protein from Clostridium perfringens (strain 13 / Type A).